The chain runs to 1323 residues: Receptor tyrosine-protein kinase let-23 (1323 aa).

The N-terminal stretch at 1 to 20 (MRYPPSIGSILLIIPIFLTF) is a signal peptide. Topologically, residues 21 to 818 (FGNSNAQLWK…DIASRQRKTR (798 aa)) are extracellular. N-linked (GlcNAc...) asparagine glycosylation is found at asparagine 91 and asparagine 169. 11 cysteine pairs are disulfide-bonded: cysteine 220-cysteine 228, cysteine 224-cysteine 236, cysteine 244-cysteine 251, cysteine 248-cysteine 262, cysteine 263-cysteine 271, cysteine 267-cysteine 279, cysteine 282-cysteine 291, cysteine 295-cysteine 322, cysteine 326-cysteine 337, cysteine 341-cysteine 356, and cysteine 359-cysteine 364. The N-linked (GlcNAc...) asparagine glycan is linked to asparagine 255. Asparagine 376 carries an N-linked (GlcNAc...) asparagine glycan. 20 cysteine pairs are disulfide-bonded: cysteine 520-cysteine 529, cysteine 524-cysteine 537, cysteine 540-cysteine 549, cysteine 553-cysteine 567, cysteine 570-cysteine 577, cysteine 574-cysteine 585, cysteine 588-cysteine 604, cysteine 608-cysteine 620, cysteine 623-cysteine 632, cysteine 627-cysteine 644, cysteine 647-cysteine 660, cysteine 670-cysteine 693, cysteine 696-cysteine 703, cysteine 700-cysteine 715, cysteine 717-cysteine 731, cysteine 735-cysteine 750, cysteine 753-cysteine 763, cysteine 757-cysteine 771, cysteine 774-cysteine 787, and cysteine 791-cysteine 805. A glycan (N-linked (GlcNAc...) asparagine) is linked at asparagine 561. An N-linked (GlcNAc...) asparagine glycan is attached at asparagine 655. N-linked (GlcNAc...) asparagine glycosylation occurs at asparagine 746. N-linked (GlcNAc...) asparagine glycosylation occurs at asparagine 776. A helical transmembrane segment spans residues 819–839 (MVIIGSVLFGFAVMFLFILLV). The Cytoplasmic portion of the chain corresponds to 840–1323 (YWRCQRIGKK…EEVSQKETCL (484 aa)). The region spanning 885–1152 (TKLDKKLGAG…EFCKVPQLFL (268 aa)) is the Protein kinase domain. Residues 891 to 899 (LGAGAFGTV) and lysine 919 contribute to the ATP site. Residue aspartate 1010 is the Proton acceptor of the active site. Residues 1265-1289 (GQTELSPSNGDYYNQPNTPSSSSGY) show a composition bias toward polar residues. A disordered region spans residues 1265-1323 (GQTELSPSNGDYYNQPNTPSSSSGYYNEPHLKTKKPETSEEAEAVQYENEEVSQKETCL). The span at 1293 to 1302 (PHLKTKKPET) shows a compositional bias: basic and acidic residues. Residues 1303–1315 (SEEAEAVQYENEE) are compositionally biased toward acidic residues.

The protein belongs to the protein kinase superfamily. Tyr protein kinase family. EGF receptor subfamily. In terms of tissue distribution, expressed in vulval precursor cells (at protein level). Expressed in ALA neurons, 2 ventral head neurons, a single neuron in the tail, pharyngeal-intestinal valve and posterior arcade epithelial cells.

The protein resides in the apical cell membrane. It is found in the basolateral cell membrane. The catalysed reaction is L-tyrosyl-[protein] + ATP = O-phospho-L-tyrosyl-[protein] + ADP + H(+). Tyrosine-protein kinase receptor which, upon binding ligand lin-3, activates 2 signaling cascades: the let-60/Ras and MAP kinase signaling pathway and the let-60-independent phospholipase C-mediated Ca(2+) signaling pathway. Each pathway regulates distinct functions. By activating let-60/Ras, regulates larval development, induction of vulva cell precursors during vulva development, male spicule formation and posterior development of the epidermis. Probably by activating phospholipase plc-3 and inositol 1,4,5-trisphosphate receptor itr-1 signaling cascade downstream of ligand lin-3, plays a role in ovulation by promoting ovulatory gonadal sheath cell contractions. Probably by regulating neuronal transmission in ALA neurons, mediates, independently of let-60/Ras, the decrease in pharyngeal pumping and locomotion during the quiescent state that precedes each larval molt, downstream of lin-3 and upstream of plc-3. This chain is Receptor tyrosine-protein kinase let-23, found in Caenorhabditis elegans.